The following is a 379-amino-acid chain: 3-dehydroquinate synthase (379 aa).

NAD(+)-binding positions include 67-72, 101-105, 125-126, lysine 138, and lysine 147; these read PGEKNK, GIVLD, and TT. Zn(2+) contacts are provided by glutamate 180, histidine 242, and histidine 258.

This sequence belongs to the sugar phosphate cyclases superfamily. Dehydroquinate synthase family. NAD(+) serves as cofactor. The cofactor is Co(2+). Requires Zn(2+) as cofactor.

It is found in the cytoplasm. The catalysed reaction is 7-phospho-2-dehydro-3-deoxy-D-arabino-heptonate = 3-dehydroquinate + phosphate. The protein operates within metabolic intermediate biosynthesis; chorismate biosynthesis; chorismate from D-erythrose 4-phosphate and phosphoenolpyruvate: step 2/7. In terms of biological role, catalyzes the conversion of 3-deoxy-D-arabino-heptulosonate 7-phosphate (DAHP) to dehydroquinate (DHQ). The sequence is that of 3-dehydroquinate synthase from Chlamydia felis (strain Fe/C-56) (Chlamydophila felis).